The sequence spans 159 residues: Protein-export protein SecB (159 aa).

It belongs to the SecB family. In terms of assembly, homotetramer, a dimer of dimers. One homotetramer interacts with 1 SecA dimer.

The protein localises to the cytoplasm. Its function is as follows. One of the proteins required for the normal export of preproteins out of the cell cytoplasm. It is a molecular chaperone that binds to a subset of precursor proteins, maintaining them in a translocation-competent state. It also specifically binds to its receptor SecA. This is Protein-export protein SecB from Burkholderia mallei (strain NCTC 10229).